Consider the following 367-residue polypeptide: Epoxide hydrolase 3 (367 aa).

Residues 22–42 (ALVMSLVYLAALVAAFVYSCI) traverse the membrane as a helical segment. The active-site Nucleophile is aspartate 180. The active-site Proton donor is tyrosine 288. Histidine 344 serves as the catalytic Proton acceptor.

The protein belongs to the AB hydrolase superfamily. Epoxide hydrolase family. In terms of tissue distribution, predominantly expressed in skin, esophagus, lung and tongue and to a lesser extent in pancreas and eye.

It localises to the microsome membrane. It catalyses the reaction an epoxide + H2O = an ethanediol. It carries out the reaction 9,10-epoxyoctadecanoate + H2O = 9,10-dihydroxyoctadecanoate. The catalysed reaction is 9,10-epoxy-(12Z)-octadecenoate + H2O = 9,10-dihydroxy-(12Z)-octadecenoate. The enzyme catalyses 8,9-epoxy-(5Z,11Z,14Z)-eicosatrienoate + H2O = 8,9-dihydroxy-(5Z,11Z,14Z)-eicosatrienoate. It catalyses the reaction 11,12-epoxy-(5Z,8Z,14Z)-eicosatrienoate + H2O = 11,12-dihydroxy-(5Z,8Z,14Z)-eicosatrienoate. It carries out the reaction 14,15-epoxy-(5Z,8Z,11Z)-eicosatrienoate + H2O = 14,15-dihydroxy-(5Z,8Z,11Z)-eicosatrienoate. Its activity is regulated as follows. Inhibited by 1-(1-acetylpiperidin-4-yl)-3-(4-(trifl uoromethoxy)phenyl)urea (TPAU), 1-cyclohexyl-3-dodecylurea (CDU), 12-(3-adamantan-1-yl-ureido)-dodecanoic acid (AUDA), 1-((3S, 5S, 7S)-adamantan-1-yl)-3-(5-(2-(2-ethoxyethoxy) ethoxy)pentyl)urea (AEPU) and to a lesser extent by 8-(3-((3S, 5S, 7S)-adamantan-1-yl)ureido) octanoic acid (AUOA). In terms of biological role, catalyzes the hydrolysis of epoxide-containing fatty acids. Active in vitro against epoxyeicosatrienoic acids (EETs) including 8,9-EET, 9,10-EET, 11,12-EET and 14,15-EET and leukotoxin. The sequence is that of Epoxide hydrolase 3 (Ephx3) from Mus musculus (Mouse).